A 215-amino-acid chain; its full sequence is Histone-like protein 18C (215 aa).

Residues 140–215 (CTPRKENKCS…PKSSKPKCSM (76 aa)) are disordered. Basic residues-rich tracts occupy residues 149 to 190 (SKPR…RPRK) and 197 to 215 (AKAK…KCSM).

In terms of biological role, not known. Encoded in the intron of cAMP-dependent protein kinase regulatory chain type I. This Drosophila melanogaster (Fruit fly) protein is Histone-like protein 18C (Mst77F).